We begin with the raw amino-acid sequence, 590 residues long: Complement component C8 beta chain (590 aa).

A signal peptide spans 1–32 (MKKSWTWTWRVPAELLLLCAALGCLCVPGSRS). Residues 33 to 54 (ERPRSLEPTVVNRSLAKSRHSR) constitute a propeptide that is removed on maturation. An N-linked (GlcNAc...) asparagine glycan is attached at N44. A TSP type-1 1 domain is found at 64–117 (DCELSSWSSWTMCDPCQKKRYRHAYLLRPSQFNGEPCNFSDKEVEDCATSRPCR). 7 cysteine pairs are disulfide-bonded: C65-C100, C76-C110, C79-C116, C122-C133, C127-C146, C140-C155, and C162-C200. C-linked (Man) tryptophan glycans are attached at residues W70 and W73. N101 carries N-linked (GlcNAc...) asparagine glycosylation. The 38-residue stretch at 120 to 157 (VRCEGFVCAQTGRCVNRRLLCNGDNDCGDQSDEANCRK) folds into the LDL-receptor class A domain. Positions 138, 141, 143, 145, 151, and 152 each coordinate Ca(2+). Positions 158–504 (IYKKCHHEME…EFQGEVSPCR (347 aa)) constitute an MACPF domain. Beta stranded transmembrane passes span 252–259 (STFNLGFK), 262–269 (SIFEFGIN), 379–386 (AKNDFKLG), and 392–399 (VYVSLGVS). An intrachain disulfide couples C378 to C403. Residue T418 is modified to Phosphothreonine. 4 cysteine pairs are disulfide-bonded: C503–C550, C505–C521, C508–C523, and C525–C534. The EGF-like domain maps to 505–535 (CAPCQGNGVPVQKGSRCDCICPVGFQGSACE). A TSP type-1 2 domain is found at 545–588 (DGRWSCWSRWSSCSGGQKTRRRQCNNPAPQDGGSPCSGPASETL). W551 and W554 each carry a C-linked (Man) tryptophan glycan. A disulfide bridge links C557 with C590. The disordered stretch occupies residues 557-590 (CSGGQKTRRRQCNNPAPQDGGSPCSGPASETLAC).

Belongs to the complement C6/C7/C8/C9 family. As to quaternary structure, heterotrimer of 3 chains: alpha (C8A), beta (C8B) and gamma (C8G); the alpha and gamma chains are disulfide bonded. Component of the membrane attack complex (MAC), composed of complement C5b, C6, C7, C8A, C8B, C8G and multiple copies of the pore-forming subunit C9. In terms of processing, N-glycosylated; contains one or two bound glycans. Not O-glycosylated.

The protein resides in the secreted. The protein localises to the target cell membrane. Membrane attack complex (MAC) assembly is inhibited by CD59, thereby protecting self-cells from damage during complement activation. CD59 acts by binding to the beta-haipins of C8 (C8A and C8B), forming an intermolecular beta-sheet that prevents incorporation of the multiple copies of C9 required for complete formation of the osmolytic pore. MAC assembly is also inhibited by clusterin (CLU) chaperones that inhibit polymerization of C9. In terms of biological role, component of the membrane attack complex (MAC), a multiprotein complex activated by the complement cascade, which inserts into a target cell membrane and forms a pore, leading to target cell membrane rupture and cell lysis. The MAC is initiated by proteolytic cleavage of C5 into complement C5b in response to the classical, alternative, lectin and GZMK complement pathways. The complement pathways consist in a cascade of proteins that leads to phagocytosis and breakdown of pathogens and signaling that strengthens the adaptive immune system. C8B, together with C8A and C8G, inserts into the target membrane, but does not form pores by itself. During MAC assembly, associates with C5b, C6 and C7 to form the C5b8 intermediate complex that inserts into the target membrane and traverses the bilayer increasing membrane rigidity. This chain is Complement component C8 beta chain (C8B), found in Oryctolagus cuniculus (Rabbit).